A 292-amino-acid chain; its full sequence is Putative rRNA 2'-O-methyltransferase fibrillarin 3 (292 aa).

The tract at residues 1-58 is disordered; sequence MKPPQRGRGGGVRGGRGLARGGEGSAVRGSGRGGESGRGRGPGRVKSESDGGIKGGSK. Gly residues predominate over residues 7 to 42; the sequence is GRGGGVRGGRGLARGGEGSAVRGSGRGGESGRGRGP. Residues 146 to 147, 165 to 166, 190 to 191, and 210 to 213 contribute to the S-adenosyl-L-methionine site; these read YT, EH, DA, and DVNH.

It belongs to the methyltransferase superfamily. Fibrillarin family. As to quaternary structure, component of box C/D small nucleolar ribonucleoprotein (snoRNP) particles. Not detectable by RT-PCR.

The protein localises to the nucleus. It is found in the nucleolus. It catalyses the reaction L-glutaminyl-[histone H2A] + S-adenosyl-L-methionine = N(5)-methyl-L-glutaminyl-[histone H2A] + S-adenosyl-L-homocysteine + H(+). S-adenosyl-L-methionine-dependent methyltransferase that has the ability to methylate both RNAs and proteins. Involved in pre-rRNA processing. Utilizes the methyl donor S-adenosyl-L-methionine to catalyze the site-specific 2'-hydroxyl methylation of ribose moieties in pre-ribosomal RNA. Site specificity is provided by a guide RNA that base pairs with the substrate. Methylation occurs at a characteristic distance from the sequence involved in base pairing with the guide RNA. Also acts as a protein methyltransferase by mediating methylation of 'Gln-105' of histone H2A (H2AQ105me), a modification that impairs binding of the FACT complex and is specifically present at 35S ribosomal DNA locus. In Arabidopsis thaliana (Mouse-ear cress), this protein is Putative rRNA 2'-O-methyltransferase fibrillarin 3 (FIB3).